Consider the following 214-residue polypeptide: 3,4-dihydroxy-2-butanone 4-phosphate synthase (214 aa).

Residues 37–38 (RE), D42, 150–154 (RRGHT), and E174 contribute to the D-ribulose 5-phosphate site. A Mg(2+)-binding site is contributed by E38. H153 contacts Mg(2+).

The protein belongs to the DHBP synthase family. As to quaternary structure, homodimer. The cofactor is Mg(2+). Requires Mn(2+) as cofactor.

The catalysed reaction is D-ribulose 5-phosphate = (2S)-2-hydroxy-3-oxobutyl phosphate + formate + H(+). Its pathway is cofactor biosynthesis; riboflavin biosynthesis; 2-hydroxy-3-oxobutyl phosphate from D-ribulose 5-phosphate: step 1/1. In terms of biological role, catalyzes the conversion of D-ribulose 5-phosphate to formate and 3,4-dihydroxy-2-butanone 4-phosphate. This chain is 3,4-dihydroxy-2-butanone 4-phosphate synthase, found in Pasteurella multocida (strain Pm70).